The primary structure comprises 104 residues: Small ribosomal subunit protein uS10 (104 aa).

It belongs to the universal ribosomal protein uS10 family. Part of the 30S ribosomal subunit.

Involved in the binding of tRNA to the ribosomes. In Aliarcobacter butzleri (strain RM4018) (Arcobacter butzleri), this protein is Small ribosomal subunit protein uS10.